The chain runs to 197 residues: dITP/XTP pyrophosphatase (197 aa).

8 to 13 serves as a coordination point for substrate; it reads TGNAGK. Mg(2+) is bound by residues Glu-40 and Asp-69. Asp-69 functions as the Proton acceptor in the catalytic mechanism. Substrate-binding positions include Ser-70, 154-157, Lys-177, and 182-183; these read FGYD and HR.

It belongs to the HAM1 NTPase family. In terms of assembly, homodimer. Mg(2+) serves as cofactor.

It catalyses the reaction XTP + H2O = XMP + diphosphate + H(+). It carries out the reaction dITP + H2O = dIMP + diphosphate + H(+). The catalysed reaction is ITP + H2O = IMP + diphosphate + H(+). Its function is as follows. Pyrophosphatase that catalyzes the hydrolysis of nucleoside triphosphates to their monophosphate derivatives, with a high preference for the non-canonical purine nucleotides XTP (xanthosine triphosphate), dITP (deoxyinosine triphosphate) and ITP. Seems to function as a house-cleaning enzyme that removes non-canonical purine nucleotides from the nucleotide pool, thus preventing their incorporation into DNA/RNA and avoiding chromosomal lesions. The polypeptide is dITP/XTP pyrophosphatase (rdgB) (Salmonella typhi).